The following is a 440-amino-acid chain: MKPIIAIVGRPNVGKSTLFNRLVGRRKAMVDDMPGVTRDRNYAEVNRFDVPFILVDTGGFEPETSDRLLQQMREQSRFAMDEADLILFIMDARGGLTPADRDVVDMLRRINKPVFYIINKVDGEKQEAEAGDFYSLGVDHIHTISAEHNRGVGDLMDEVLAAIPYDREKELDEEITRIAVVGRPNVGKSTLVNRLLGYERVVANPTAGTTRDAVDTRFTVNKKPYLLIDTAGIRRKGKTVQKVEKYSVMDALRSIERADVVLIVLNAEEGVTEQDSKIAGYAYEAGRGCIFVVNKWDTLAKDNSSIAKFTEEIRRNFKYLPFAPILFVSAETGQRTGKIIAEVDQVMEQYCKRVTTGELNRVFTQAVDENHAPLSAGRRVKFYFATQVAVKPPSFVVFTNCPEGIHFSYERYIMNRFREAFGFNGTPLKLIFRGRDKKDA.

EngA-type G domains lie at Pro3 to Arg167 and Thr176 to Cys351. GTP contacts are provided by residues Gly9–Ser16, Asp56–Phe60, Asn119–Asp122, Gly182–Ser189, Asp229–Ile233, and Asn294–Asp297. The KH-like domain occupies Lys352–Asp436.

The protein belongs to the TRAFAC class TrmE-Era-EngA-EngB-Septin-like GTPase superfamily. EngA (Der) GTPase family. As to quaternary structure, associates with the 50S ribosomal subunit.

GTPase that plays an essential role in the late steps of ribosome biogenesis. This is GTPase Der from Citrifermentans bemidjiense (strain ATCC BAA-1014 / DSM 16622 / JCM 12645 / Bem) (Geobacter bemidjiensis).